Reading from the N-terminus, the 184-residue chain is ATP synthase subunit b, chloroplastic (184 aa).

A helical transmembrane segment spans residues 27–49; sequence LATNLINLSVVLGVLIFFGKGVL.

It belongs to the ATPase B chain family. In terms of assembly, F-type ATPases have 2 components, F(1) - the catalytic core - and F(0) - the membrane proton channel. F(1) has five subunits: alpha(3), beta(3), gamma(1), delta(1), epsilon(1). F(0) has four main subunits: a(1), b(1), b'(1) and c(10-14). The alpha and beta chains form an alternating ring which encloses part of the gamma chain. F(1) is attached to F(0) by a central stalk formed by the gamma and epsilon chains, while a peripheral stalk is formed by the delta, b and b' chains.

The protein resides in the plastid. It is found in the chloroplast thylakoid membrane. F(1)F(0) ATP synthase produces ATP from ADP in the presence of a proton or sodium gradient. F-type ATPases consist of two structural domains, F(1) containing the extramembraneous catalytic core and F(0) containing the membrane proton channel, linked together by a central stalk and a peripheral stalk. During catalysis, ATP synthesis in the catalytic domain of F(1) is coupled via a rotary mechanism of the central stalk subunits to proton translocation. Its function is as follows. Component of the F(0) channel, it forms part of the peripheral stalk, linking F(1) to F(0). The protein is ATP synthase subunit b, chloroplastic of Manihot esculenta (Cassava).